The following is a 108-amino-acid chain: MATRLANTPQRETGTVIERKEQQLKPPAMYKVVLLNDDYTPMEFVVMILQQYFSRDRETATQIMLTVHREGKGVCGIYTRDIAATKVELVSTHARQAGHPLQCVMEEA.

Belongs to the ClpS family. Binds to the N-terminal domain of the chaperone ClpA.

Its function is as follows. Involved in the modulation of the specificity of the ClpAP-mediated ATP-dependent protein degradation. In Cupriavidus metallidurans (strain ATCC 43123 / DSM 2839 / NBRC 102507 / CH34) (Ralstonia metallidurans), this protein is ATP-dependent Clp protease adapter protein ClpS.